Here is a 338-residue protein sequence, read N- to C-terminus: RNA 3'-terminal phosphate cyclase (338 aa).

ATP contacts are provided by residues Gln103 and Tyr283–Gln287. The Tele-AMP-histidine intermediate role is filled by His308.

Belongs to the RNA 3'-terminal cyclase family. Type 1 subfamily.

The protein resides in the cytoplasm. It carries out the reaction a 3'-end 3'-phospho-ribonucleotide-RNA + ATP = a 3'-end 2',3'-cyclophospho-ribonucleotide-RNA + AMP + diphosphate. Functionally, catalyzes the conversion of 3'-phosphate to a 2',3'-cyclic phosphodiester at the end of RNA. The mechanism of action of the enzyme occurs in 3 steps: (A) adenylation of the enzyme by ATP; (B) transfer of adenylate to an RNA-N3'P to produce RNA-N3'PP5'A; (C) and attack of the adjacent 2'-hydroxyl on the 3'-phosphorus in the diester linkage to produce the cyclic end product. The biological role of this enzyme is unknown but it is likely to function in some aspects of cellular RNA processing. This chain is RNA 3'-terminal phosphate cyclase, found in Shigella boydii serotype 4 (strain Sb227).